Reading from the N-terminus, the 179-residue chain is Large ribosomal subunit protein uL5 (179 aa).

This sequence belongs to the universal ribosomal protein uL5 family. In terms of assembly, part of the 50S ribosomal subunit; part of the 5S rRNA/L5/L18/L25 subcomplex. Contacts the 5S rRNA and the P site tRNA. Forms a bridge to the 30S subunit in the 70S ribosome.

Functionally, this is one of the proteins that bind and probably mediate the attachment of the 5S RNA into the large ribosomal subunit, where it forms part of the central protuberance. In the 70S ribosome it contacts protein S13 of the 30S subunit (bridge B1b), connecting the 2 subunits; this bridge is implicated in subunit movement. Contacts the P site tRNA; the 5S rRNA and some of its associated proteins might help stabilize positioning of ribosome-bound tRNAs. In Lysinibacillus sphaericus (strain C3-41), this protein is Large ribosomal subunit protein uL5.